Consider the following 220-residue polypeptide: Ribosomal RNA large subunit methyltransferase E (220 aa).

Residues G64, W66, D84, D100, and D125 each contribute to the S-adenosyl-L-methionine site. K165 acts as the Proton acceptor in catalysis.

Belongs to the class I-like SAM-binding methyltransferase superfamily. RNA methyltransferase RlmE family.

The protein resides in the cytoplasm. It carries out the reaction uridine(2552) in 23S rRNA + S-adenosyl-L-methionine = 2'-O-methyluridine(2552) in 23S rRNA + S-adenosyl-L-homocysteine + H(+). In terms of biological role, specifically methylates the uridine in position 2552 of 23S rRNA at the 2'-O position of the ribose in the fully assembled 50S ribosomal subunit. This Thiobacillus denitrificans (strain ATCC 25259 / T1) protein is Ribosomal RNA large subunit methyltransferase E.